A 366-amino-acid polypeptide reads, in one-letter code: Probable S-adenosyl-L-methionine-binding protein AF_0433 (366 aa).

The 131-residue stretch at 6–136 (LRQVGVIRSP…YSSTIDSVGN (131 aa)) folds into the TsaA-like domain. Residues 23 to 25 (PHQ), 61 to 62 (DR), arginine 85, and 116 to 119 (LDGT) contribute to the S-adenosyl-L-methionine site.

This sequence belongs to the tRNA methyltransferase O family.

The polypeptide is Probable S-adenosyl-L-methionine-binding protein AF_0433 (Archaeoglobus fulgidus (strain ATCC 49558 / DSM 4304 / JCM 9628 / NBRC 100126 / VC-16)).